We begin with the raw amino-acid sequence, 308 residues long: F-actin-capping protein subunit alpha (308 aa).

The protein belongs to the F-actin-capping protein alpha subunit family. Component of the F-actin capping complex, composed of a heterodimer of an alpha and a beta subunit.

Functionally, F-actin-capping proteins bind in a Ca(2+)-independent manner to the fast growing ends of actin filaments (barbed end) thereby blocking the exchange of subunits at these ends. Unlike other capping proteins (such as gelsolin and severin), these proteins do not sever actin filaments. This is F-actin-capping protein subunit alpha from Arabidopsis thaliana (Mouse-ear cress).